Reading from the N-terminus, the 266-residue chain is Tryptophan synthase alpha chain (266 aa).

Active-site proton acceptor residues include glutamate 49 and aspartate 60.

Belongs to the TrpA family. Tetramer of two alpha and two beta chains.

It catalyses the reaction (1S,2R)-1-C-(indol-3-yl)glycerol 3-phosphate + L-serine = D-glyceraldehyde 3-phosphate + L-tryptophan + H2O. It functions in the pathway amino-acid biosynthesis; L-tryptophan biosynthesis; L-tryptophan from chorismate: step 5/5. In terms of biological role, the alpha subunit is responsible for the aldol cleavage of indoleglycerol phosphate to indole and glyceraldehyde 3-phosphate. This is Tryptophan synthase alpha chain from Shewanella amazonensis (strain ATCC BAA-1098 / SB2B).